Consider the following 345-residue polypeptide: N-acetyl-gamma-glutamyl-phosphate reductase (345 aa).

Residue C149 is part of the active site.

The protein belongs to the NAGSA dehydrogenase family. Type 1 subfamily.

It localises to the cytoplasm. The catalysed reaction is N-acetyl-L-glutamate 5-semialdehyde + phosphate + NADP(+) = N-acetyl-L-glutamyl 5-phosphate + NADPH + H(+). Its pathway is amino-acid biosynthesis; L-arginine biosynthesis; N(2)-acetyl-L-ornithine from L-glutamate: step 3/4. In terms of biological role, catalyzes the NADPH-dependent reduction of N-acetyl-5-glutamyl phosphate to yield N-acetyl-L-glutamate 5-semialdehyde. In Bacillus cytotoxicus (strain DSM 22905 / CIP 110041 / 391-98 / NVH 391-98), this protein is N-acetyl-gamma-glutamyl-phosphate reductase.